The sequence spans 199 residues: Recombination protein RecR (199 aa).

The C4-type zinc-finger motif lies at 56 to 71; that stretch reads CAICGNVAEHEQCRIC. One can recognise a Toprim domain in the interval 79-174; sequence TVLCVVEEPK…RVTRLASGLP (96 aa).

Belongs to the RecR family.

Its function is as follows. May play a role in DNA repair. It seems to be involved in an RecBC-independent recombinational process of DNA repair. It may act with RecF and RecO. The protein is Recombination protein RecR of Acidothermus cellulolyticus (strain ATCC 43068 / DSM 8971 / 11B).